The following is a 337-amino-acid chain: G-protein coupled receptor 26 (337 aa).

At 1–10 the chain is on the extracellular side; it reads MNSWDAGLAG. The helical transmembrane segment at 11-31 threads the bilayer; the sequence is LLVGTIGVSLLSNGLVLLCLL. The Cytoplasmic segment spans residues 32–47; the sequence is HSADIRRQAPALFTLN. A helical membrane pass occupies residues 48–68; it reads LTCGNLLCTVVNMPLTLAGVV. Topologically, residues 69–81 are extracellular; sequence AQRQPAGDRLCRL. Cysteine 79 and cysteine 156 are oxidised to a cystine. Residues 82-102 form a helical membrane-spanning segment; it reads AAFLDTFLAANSMLSMAALSI. Residues 103 to 123 lie on the Cytoplasmic side of the membrane; that stretch reads DRWVAVVFPLSYRAKMRLRDA. A helical transmembrane segment spans residues 124 to 144; it reads AFMVAYTWLHALTFPATALAL. Residues 145–168 are Extracellular-facing; it reads SWLGFHQLYASCTLCSRRPDERLR. A helical transmembrane segment spans residues 169–189; that stretch reads FAVFTSAFHALSFLLSFIVLC. The Cytoplasmic segment spans residues 190-245; the sequence is FTYLKVLKVARFHCKRIDVITMQTLVLLVDIHPSVRERCLEEQKRRRQRATKKIST. A helical membrane pass occupies residues 246–266; the sequence is FIGTFLVCFAPYVITRLVELF. At 267–276 the chain is on the extracellular side; that stretch reads STAPIGSHWG. The chain crosses the membrane as a helical span at residues 277-297; sequence VLSKCLAYSKAASDPFVYSLL. Over 298 to 337 the chain is Cytoplasmic; sequence RHQYRRSCKELLNRIFNRRSLHSVGLTGDSHSQNILPVSE.

Belongs to the G-protein coupled receptor 1 family. As to expression, exclusively expressed in the brain. Prominent expression is detected throughout the entire neocortex at all rostrocaudal and dorsoventral levels. Strong expression is detected in olfactory and auditory sensory areas.

The protein localises to the cell membrane. Its function is as follows. Orphan receptor. Displays a significant level of constitutive activity. Its effect is mediated by G(s)-alpha protein that stimulate adenylate cyclase, resulting in an elevation of intracellular cAMP. This chain is G-protein coupled receptor 26 (Gpr26), found in Mus musculus (Mouse).